Consider the following 1418-residue polypeptide: Alpha-latrotoxin-Lhe1a (1418 aa).

An N-terminal signal peptide occupies residues 1–20; the sequence is MIFVGETMERANHSLVRLRR. The segment at 17 to 20 is furin-like endopeptidase recognition region; it reads RLRR. Positions 238–257 are helix H8 is the probable transmembrane region of the tetrameric pore inserted in the target cell membrane; sequence VLYALLYGTQTYISVMFFLL. Cysteines 413 and 1066 form a disulfide. ANK repeat units follow at residues 458–489, 490–521, 525–554, 559–589, 593–622, 626–656, 660–690, 695–723, 729–758, 762–791, 795–824, 828–857, 862–891, 895–924, 928–957, 971–1003, 1004–1033, 1035–1064, 1068–1097, 1101–1131, 1137–1166, and 1170–1199; these read LYNA…ATFD, QGRT…ELNQ, KGYT…SINS, FLQT…NINE, DGFT…DVNA, KGLT…DINA, NNMT…NANV, GLLS…NVNV, GGIT…NIEQ, EKYT…NFEA, SGAT…NWRD, NGQM…TVLD, NSDT…DINT, NGHA…NVYI, NGMN…KFEW, EECA…GNFN, ICGP…SVDG, KTDT…KVNH, NGMT…DFRR, RGAT…DINI, DKET…DVTI, and YDKT…KFRR. Residues 1026 to 1032 are 4C4.1 epitope; sequence EEVLSVD. The segment at 1196–1199 is furin-like endopeptidase recognition region; it reads KFRR. Residues 1200–1418 constitute a propeptide that is removed on maturation; sequence EYKSSYGEHS…SEKKIQKISI (219 aa).

This sequence belongs to the cationic peptide 01 (latrotoxin) family. 03 (alpha-latrotoxin) subfamily. Homotetramer in membranes. Post-translationally, processed by furin-like proteases at both the N- and C-termini. Expressed in venom gland, cephalothorax, and abdomen tissues from both males and females.

Its subcellular location is the secreted. The protein localises to the target cell membrane. In terms of biological role, presynaptic neurotoxin that causes massive release of neurotransmitters from vertebrate (but not invertebrate) nerve terminals and endocrine cells via a complex mechanism involving activation of receptor(s) and toxin insertion into the plasma membrane with subsequent pore formation. Binds to neurexin-1-alpha (NRXN1) in a calcium dependent manner, adhesion G protein-coupled receptor L1 (ADGRL1, also termed latrophilin-1 and calcium-independent receptor of latrotoxin (CIRL)), and receptor-type tyrosine-protein phosphatase S (PTPRS), also termed PTP sigma. NRXN1 and PTPRS are suggested to provide a platform for binding and subsequent pore formation events. In contrast, binding to ADGRL1 does not involve oligomerization and channel formation, but direct downstream stimulation of the synaptic fusion machinery. This Latrodectus hesperus (Western black widow spider) protein is Alpha-latrotoxin-Lhe1a.